A 292-amino-acid chain; its full sequence is Ribonuclease HIII (292 aa).

The region spanning 76–292 (TNLIGTDEVG…TQKAIKIAQL (217 aa)) is the RNase H type-2 domain. Positions 82, 83, and 186 each coordinate a divalent metal cation.

It belongs to the RNase HII family. RnhC subfamily. Mn(2+) is required as a cofactor. It depends on Mg(2+) as a cofactor.

Its subcellular location is the cytoplasm. The enzyme catalyses Endonucleolytic cleavage to 5'-phosphomonoester.. In terms of biological role, endonuclease that specifically degrades the RNA of RNA-DNA hybrids. In Lactococcus lactis subsp. lactis (strain IL1403) (Streptococcus lactis), this protein is Ribonuclease HIII.